The chain runs to 196 residues: DnaA initiator-associating protein DiaA (196 aa).

An SIS domain is found at Leu34 to Asp196.

It belongs to the SIS family. DiaA subfamily. In terms of assembly, homotetramer; dimer of dimers.

Functionally, required for the timely initiation of chromosomal replication via direct interactions with the DnaA initiator protein. The protein is DnaA initiator-associating protein DiaA of Yersinia pseudotuberculosis serotype O:1b (strain IP 31758).